The primary structure comprises 288 residues: Bifunctional protein FolD (288 aa).

NADP(+) is bound by residues 166–168 (GAS) and I232.

Belongs to the tetrahydrofolate dehydrogenase/cyclohydrolase family. In terms of assembly, homodimer.

It catalyses the reaction (6R)-5,10-methylene-5,6,7,8-tetrahydrofolate + NADP(+) = (6R)-5,10-methenyltetrahydrofolate + NADPH. It carries out the reaction (6R)-5,10-methenyltetrahydrofolate + H2O = (6R)-10-formyltetrahydrofolate + H(+). The protein operates within one-carbon metabolism; tetrahydrofolate interconversion. Catalyzes the oxidation of 5,10-methylenetetrahydrofolate to 5,10-methenyltetrahydrofolate and then the hydrolysis of 5,10-methenyltetrahydrofolate to 10-formyltetrahydrofolate. This is Bifunctional protein FolD from Escherichia coli (strain SMS-3-5 / SECEC).